Here is a 530-residue protein sequence, read N- to C-terminus: Arginine--tRNA ligase (530 aa).

Residues 113 to 123 (ANPTGPLHIGH) carry the 'HIGH' region motif.

This sequence belongs to the class-I aminoacyl-tRNA synthetase family. Monomer.

It localises to the cytoplasm. It catalyses the reaction tRNA(Arg) + L-arginine + ATP = L-arginyl-tRNA(Arg) + AMP + diphosphate. This is Arginine--tRNA ligase from Campylobacter jejuni subsp. jejuni serotype O:23/36 (strain 81-176).